A 419-amino-acid polypeptide reads, in one-letter code: Carboxypeptidase A1 (419 aa).

The signal sequence occupies residues 1–16 (MWGLLIFSVLLGGVLA). Residues 17 to 110 (KEDFVGHQVL…QEQMFASQGR (94 aa)) constitute a propeptide, activation peptide. A Peptidase M14 domain is found at 121–414 (TYHTLEEIYD…LALLTIMEHT (294 aa)). Zn(2+)-binding residues include histidine 179 and glutamate 182. Substrate contacts are provided by residues 179–182 (HSRE), arginine 237, and 254–255 (NR). An intrachain disulfide couples cysteine 248 to cysteine 271. A Zn(2+)-binding site is contributed by histidine 306. Substrate contacts are provided by residues 307 to 308 (SY) and tyrosine 358. Glutamate 380 functions as the Proton donor/acceptor in the catalytic mechanism.

The protein belongs to the peptidase M14 family. In terms of assembly, monomer. May form a complex with proelastase 2. It depends on Zn(2+) as a cofactor.

The protein localises to the secreted. The catalysed reaction is Release of a C-terminal amino acid, but little or no action with -Asp, -Glu, -Arg, -Lys or -Pro.. It catalyses the reaction leukotriene C4 + H2O = leukotriene F4 + glycine. Functionally, carboxypeptidase that catalyzes the release of a C-terminal amino acid, but has little or no action with -Asp, -Glu, -Arg, -Lys or -Pro. Catalyzes the conversion of leukotriene C4 to leukotriene F4 via the hydrolysis of an amide bond. The sequence is that of Carboxypeptidase A1 (CPA1) from Sus scrofa (Pig).